Consider the following 444-residue polypeptide: Phosphoglucosamine mutase (444 aa).

S102 acts as the Phosphoserine intermediate in catalysis. S102, D241, D243, and D245 together coordinate Mg(2+). S102 is subject to Phosphoserine.

It belongs to the phosphohexose mutase family. Requires Mg(2+) as cofactor. In terms of processing, activated by phosphorylation.

It carries out the reaction alpha-D-glucosamine 1-phosphate = D-glucosamine 6-phosphate. Its function is as follows. Catalyzes the conversion of glucosamine-6-phosphate to glucosamine-1-phosphate. The sequence is that of Phosphoglucosamine mutase from Pasteurella multocida (strain Pm70).